A 621-amino-acid chain; its full sequence is Rab proteins geranylgeranyltransferase component A 2 (621 aa).

The disordered stretch occupies residues 113-171 (VQDTETLQRSSPLEASATPADSLDSASLPKERQSAYSTSYEVPSRHTEESDRELSLPSA). Polar residues predominate over residues 115–125 (DTETLQRSSPL). The segment covering 155-166 (PSRHTEESDREL) has biased composition (basic and acidic residues).

It belongs to the Rab GDI family. In terms of assembly, monomer. Heterotrimer composed of RABGGTA, RABGGTB and CHML; within this trimer, RABGGTA and RABGGTB form the catalytic component B, while CHML (component A) mediates Rab protein binding. Interacts with RAB1A, RAB7A and RAB27A, but has much lower affinity for RAB1A, RAB7A and RAB27A than CHM. Interacts with the non-phosphorylated forms of RAB3A, RAB3B, RAB3C, RAB3D, RAB5B, RAB5C, RAB8A, RAB8B, RAB10, RAB12, RAB35, and RAB43.

It is found in the cytoplasm. The protein resides in the cytosol. Its function is as follows. Substrate-binding subunit (component A) of the Rab geranylgeranyltransferase (GGTase) complex. Binds unprenylated Rab proteins and presents the substrate peptide to the catalytic component B. The component A is thought to be regenerated by transferring its prenylated Rab back to the donor membrane. Less effective than CHM in supporting prenylation of Rab3 family. In Mus musculus (Mouse), this protein is Rab proteins geranylgeranyltransferase component A 2 (Chml).